The primary structure comprises 2187 residues: Nascent polypeptide-associated complex subunit alpha, muscle-specific form (2187 aa).

Disordered stretches follow at residues 1–20 (MPGE…PQPQ), 32–73 (LKVA…STPF), and 172–196 (IPPL…KGTA). Residues 9-20 (VPATEQELPQPQ) are compositionally biased toward polar residues. Residues 178–192 (KTSTSQVPSQGTLNL) show a composition bias toward polar residues. Asymmetric dimethylarginine is present on Arg-247. Disordered stretches follow at residues 335-370 (DSGA…LSPK), 579-611 (NTVS…SPLV), 738-835 (PKGS…PKDT), 884-1847 (KETL…PVEK), and 1892-2053 (PEAV…KAMS). The segment covering 347–369 (SAVTNELCSPPGSSNVAGTSLSP) has biased composition (polar residues). Thr-590 is modified (phosphothreonine). Composition is skewed to polar residues over residues 599 to 609 (AKNTAPSTTSP), 818 to 835 (VTPT…PKDT), and 887 to 905 (LATS…TPKS). Ser-822 is subject to Phosphoserine. Residues 941–951 (PHVPPTSPPKS) are compositionally biased toward pro residues. The span at 976–998 (TPTYPKKSPKPAASKKTPATPSP) shows a compositional bias: low complexity. Residues 1106–1122 (TPQNATPNESLAASSQK) are compositionally biased toward polar residues. Residues Ser-1174 and Ser-1177 each carry the phosphoserine modification. Positions 1174-1195 (SPLSPKKASKTAAPKEAPATPS) are enriched in low complexity. Thr-1364 carries the phosphothreonine modification. A phosphoserine mark is found at Ser-1368 and Ser-1392. The residue at position 1398 (Thr-1398) is a Phosphothreonine. A phosphoserine mark is found at Ser-1400 and Ser-1423. The span at 1429–1440 (VTPSSKKLSQTV) shows a compositional bias: polar residues. A compositionally biased stretch (low complexity) spans 1489–1504 (SPSSPKKAPKTAAPPS). At Ser-1492 the chain carries Phosphoserine. The segment covering 1609–1631 (PVTTSLAQTAPPSLQKAPSTTIP) has biased composition (polar residues). 2 stretches are compositionally biased toward low complexity: residues 1636–1670 (AAPA…TAPK) and 1714–1727 (SSPP…KRAS). The span at 1762–1772 (ACSTGTTTPQA) shows a compositional bias: polar residues. Composition is skewed to low complexity over residues 1806–1823 (KSPG…CPDP) and 1892–1914 (PEAV…LAPS). The PXLXP signature appears at 1950-1954 (PPLIP). A compositionally biased stretch (pro residues) spans 1973–1983 (APKPAGTPAPA). Residues 2001–2014 (SDSDESVPELEEQD) show a composition bias toward acidic residues. At Ser-2015 the chain carries Phosphoserine; by ILK1. Residues 2016-2029 (TQTATQQAQLAAAA) show a composition bias toward low complexity. The segment at 2041–2052 (QSRSEKKARKAM) is required for DNA-binding. The NAC-A/B domain maps to 2042–2107 (SRSEKKARKA…AKIEDLSQQA (66 aa)). Ser-2104 bears the Phosphoserine mark. Lys-2114 bears the N6-acetyllysine; alternate mark. A Glycyl lysine isopeptide (Lys-Gly) (interchain with G-Cter in SUMO2); alternate cross-link involves residue Lys-2114. Thr-2131 carries the phosphothreonine; by GSK3-beta modification. Thr-2133 carries the phosphothreonine modification. Ser-2138, Ser-2158, Ser-2163, and Ser-2175 each carry phosphoserine. One can recognise a UBA domain in the interval 2148-2185 (VEVKDIELVMSQANVSRAKAVRALKNNSNDIVNAIMEL).

It belongs to the NAC-alpha family. In terms of assembly, interacts (via PXLXP motif) with the muscle-restricted histone methyltransferase SMYD1 (via MYND-type zinc finger). Post-translationally, phosphorylation of Ser-2015 by ILK during cell adhesion may promote nuclear localization. Phosphorylation of Thr-2131 by GSK3B may promote proteasome mediated degradation. Specifically expressed in heart and skeletal muscle: it is present in differentiated myotubes but not in myoblasts.

It localises to the cytoplasm. It is found in the nucleus. Functionally, cardiac- and muscle-specific transcription factor. May act to regulate the expression of genes involved in the development of myotubes. Plays a critical role in ventricular cardiomyocyte expansion and regulates postnatal skeletal muscle growth and regeneration. Involved in the organized assembly of thick and thin filaments of myofibril sarcomeres. This Mus musculus (Mouse) protein is Nascent polypeptide-associated complex subunit alpha, muscle-specific form (Naca).